We begin with the raw amino-acid sequence, 158 residues long: UPF0178 protein RPA2191 (158 aa).

Belongs to the UPF0178 family.

The polypeptide is UPF0178 protein RPA2191 (Rhodopseudomonas palustris (strain ATCC BAA-98 / CGA009)).